We begin with the raw amino-acid sequence, 427 residues long: UPF0761 membrane protein Cphamn1_1013 (427 aa).

Transmembrane regions (helical) follow at residues 51 to 71 (LLSL…SPVF), 107 to 127 (TVPT…ISTI), 147 to 167 (FTLY…GLVA), 188 to 208 (ILSY…YMLV), 218 to 238 (AVSG…WFSF), and 251 to 271 (GALS…VVAL).

Belongs to the UPF0761 family.

It is found in the cell inner membrane. The protein is UPF0761 membrane protein Cphamn1_1013 of Chlorobium phaeobacteroides (strain BS1).